Reading from the N-terminus, the 116-residue chain is Large ribosomal subunit protein bL20c (116 aa).

The protein belongs to the bacterial ribosomal protein bL20 family.

Its subcellular location is the plastid. The protein resides in the chloroplast. Its function is as follows. Binds directly to 23S ribosomal RNA and is necessary for the in vitro assembly process of the 50S ribosomal subunit. It is not involved in the protein synthesizing functions of that subunit. The sequence is that of Large ribosomal subunit protein bL20c from Rhodomonas salina (Cryptomonas salina).